The following is a 222-amino-acid chain: V-type ATP synthase subunit D (222 aa).

It belongs to the V-ATPase D subunit family.

Its function is as follows. Produces ATP from ADP in the presence of a proton gradient across the membrane. This is V-type ATP synthase subunit D from Acetivibrio thermocellus (strain ATCC 27405 / DSM 1237 / JCM 9322 / NBRC 103400 / NCIMB 10682 / NRRL B-4536 / VPI 7372) (Clostridium thermocellum).